A 436-amino-acid chain; its full sequence is Fibrinogen gamma chain (436 aa).

The N-terminal stretch at M1–A25 is a signal peptide. N77 carries N-linked (GlcNAc...) asparagine glycosylation. Positions Q169 to N415 constitute a Fibrinogen C-terminal domain. Residues C178 and C207 are joined by a disulfide bond. Ca(2+)-binding residues include D343, D345, and G349. The cysteines at positions 351 and 364 are disulfide-linked. An Isoglutamyl lysine isopeptide (Gln-Lys) (interchain with K-431) cross-link involves residue Q423. S430 carries the phosphoserine modification. Residue K431 forms an Isoglutamyl lysine isopeptide (Lys-Gln) (interchain with Q-423) linkage.

Heterohexamer; disulfide linked. Contains 2 sets of 3 non-identical chains (alpha, beta and gamma). The 2 heterotrimers are in head to head conformation with the N-termini in a small central domain. In terms of processing, conversion of fibrinogen to fibrin is triggered by thrombin, which cleaves fibrinopeptides A and B from alpha and beta chains, and thus exposes the N-terminal polymerization sites responsible for the formation of the soft clot. The soft clot is converted into the hard clot by factor XIIIA which catalyzes the epsilon-(gamma-glutamyl)lysine cross-linking between gamma chains (stronger) and between alpha chains (weaker) of different monomers.

Its subcellular location is the secreted. In terms of biological role, together with fibrinogen alpha (FGA) and fibrinogen beta (FGB), polymerizes to form an insoluble fibrin matrix. Fibrin has a major function in hemostasis as one of the primary components of blood clots. In addition, functions during the early stages of wound repair to stabilize the lesion and guide cell migration during re-epithelialization. Was originally thought to be essential for platelet aggregation, based on in vitro studies using anticoagulated blood. However, subsequent studies have shown that it is not absolutely required for thrombus formation in vivo. Enhances expression of SELP in activated platelets via an ITGB3-dependent pathway. Maternal fibrinogen is essential for successful pregnancy. Fibrin deposition is also associated with infection, where it protects against IFNG-mediated hemorrhage. May also facilitate the immune response via both innate and T-cell mediated pathways. The chain is Fibrinogen gamma chain (Fgg) from Mus musculus (Mouse).